Consider the following 644-residue polypeptide: Exoribonuclease 2 (644 aa).

The RNB domain occupies 189 to 516 (RQDLTALNFV…NHRLLKAVIK (328 aa)). Residues 561–643 (NTRFAAEIID…ETRSIIARPA (83 aa)) enclose the S1 motif domain.

Belongs to the RNR ribonuclease family. RNase II subfamily.

The protein resides in the cytoplasm. It catalyses the reaction Exonucleolytic cleavage in the 3'- to 5'-direction to yield nucleoside 5'-phosphates.. Involved in mRNA degradation. Hydrolyzes single-stranded polyribonucleotides processively in the 3' to 5' direction. This Salmonella paratyphi A (strain ATCC 9150 / SARB42) protein is Exoribonuclease 2.